Consider the following 340-residue polypeptide: UPF0324 membrane protein BC_5174 (340 aa).

Transmembrane regions (helical) follow at residues 13 to 35 (FGFSQGIGITLLIAIAAKYLAEL), 40 to 59 (IMGQLVIAILIGMVWRAAIG), 99 to 118 (VLVIAAVVITFTIFVVYGLT), 128 to 150 (GILTACGTAICGAAAVVAIAPQV), 157 to 179 (TAVGAAIIAILGTIFTLIYTLLY), 189 to 211 (YGVFSGATLHEIAHVIAAAAPGG), 218 to 240 (AVIVKLTRVAMLVPVAILIGLWF), 255 to 277 (LPIPWFIFGFLAMSAVHSLGIIP), 279 to 301 (VVAGYIVVLAYMLIAMAMAGLGL), and 316 to 338 (FVAGLIGSVCLSVLGYVLVYALG).

Belongs to the UPF0324 family.

It localises to the cell membrane. In Bacillus cereus (strain ATCC 14579 / DSM 31 / CCUG 7414 / JCM 2152 / NBRC 15305 / NCIMB 9373 / NCTC 2599 / NRRL B-3711), this protein is UPF0324 membrane protein BC_5174.